We begin with the raw amino-acid sequence, 371 residues long: DNA replication and repair protein RecF (371 aa).

30–37 is an ATP binding site; the sequence is GQNGMGKT.

This sequence belongs to the RecF family.

Its subcellular location is the cytoplasm. The RecF protein is involved in DNA metabolism; it is required for DNA replication and normal SOS inducibility. RecF binds preferentially to single-stranded, linear DNA. It also seems to bind ATP. The chain is DNA replication and repair protein RecF from Phocaeicola vulgatus (strain ATCC 8482 / DSM 1447 / JCM 5826 / CCUG 4940 / NBRC 14291 / NCTC 11154) (Bacteroides vulgatus).